We begin with the raw amino-acid sequence, 928 residues long: Chromatin structure-remodeling complex subunit RSC1 (928 aa).

Bromo domains are found at residues 4–112 and 240–342; these read QDNG…IVHN and RIKN…VRIE. Residues 368-486 form the BAH domain; it reads EKYQIGDWVL…ESDKVFNKIR (119 aa). 4 disordered regions span residues 558–586, 598–635, 657–701, and 871–908; these read DDLG…GKID, TTSS…NTPL, HNLL…KPAS, and IASG…TTSA. Residues 600 to 620 are compositionally biased toward polar residues; the sequence is SSMPRVNSSSTIRLPTLKQTK. Residues 621 to 631 are compositionally biased toward low complexity; the sequence is SIPSSNFRSSS. A compositionally biased stretch (polar residues) spans 667 to 679; it reads KFQSPSLLEQSSR. Ser-670 is modified (phosphoserine). Low complexity predominate over residues 692-701; the sequence is SSTAPKKPAS. A compositionally biased stretch (acidic residues) spans 883 to 902; it reads TAEESEDENEDTEDEHEIED.

This sequence belongs to the RSC1 family. Component of the two forms of the RSC complex composed of at least either RSC1 or RSC2, and ARP7, ARP9, LDB7, NPL6, RSC3, RSC30, RSC4, RSC58, RSC6, RSC8, RSC9, SFH1, STH1, HTL1 and probably RTT102. The complexes interact with histone and histone variant components of centromeric chromatin.

The protein resides in the nucleus. Component of the chromatin structure remodeling complex (RSC), which is involved in transcription regulation and nucleosome positioning. RSC is responsible for the transfer of a histone octamer from a nucleosome core particle to naked DNA. The reaction requires ATP and involves an activated RSC-nucleosome intermediate. Remodeling reaction also involves DNA translocation, DNA twist and conformational change. As a reconfigurer of centromeric and flanking nucleosomes, RSC complex is required both for proper kinetochore function in chromosome segregation and, via a PKC1-dependent signaling pathway, for organization of the cellular cytoskeleton. This subunit is involved in meiotic sporulation through regulating IME2 expression. The chain is Chromatin structure-remodeling complex subunit RSC1 (RSC1) from Saccharomyces cerevisiae (strain ATCC 204508 / S288c) (Baker's yeast).